The sequence spans 1041 residues: Protein EGT2 (1041 aa).

Residues 1 to 20 form the signal peptide; sequence MNKLLLHLVRVISILGLANA. 14 N-linked (GlcNAc...) asparagine glycosylation sites follow: asparagine 65, asparagine 103, asparagine 161, asparagine 175, asparagine 249, asparagine 332, asparagine 401, asparagine 435, asparagine 465, asparagine 485, asparagine 506, asparagine 526, asparagine 544, and asparagine 556. The tract at residues 388–410 is disordered; that stretch reads SSSSISLSAPSSSNSTFTTPSSS. Repeat 1 spans residues 457–492; it reads SSTLSYTSNVTISVSSATQHTTTPSYVSNSTTLSSS. The interval 457-962 is 9 X approximate repeats; it reads SSTLSYTSNV…TLKTSTFQKA (506 aa). A run of 2 repeats spans residues 577–606 and 613–647. 4 N-linked (GlcNAc...) asparagine glycosylation sites follow: asparagine 635, asparagine 636, asparagine 657, and asparagine 709. Repeat unit 4 spans residues 716–745; sequence TDKSDTYSVISSTESAQVTEYDSLLPISTL. A glycan (N-linked (GlcNAc...) asparagine) is linked at asparagine 756. 5 tandem repeats follow at residues 773–802, 811–840, 849–886, 887–924, and 925–962. Glycine 1020 is lipidated: GPI-anchor amidated glycine. Residues 1021–1041 constitute a propeptide, removed in mature form; sequence AAGQLTIRIGSLLLGLISFLL.

In terms of processing, the GPI-anchor is attached to the protein in the endoplasmic reticulum and serves to target the protein to the cell surface. There, the glucosamine-inositol phospholipid moiety is cleaved off and the GPI-modified mannoprotein is covalently attached via its lipidless GPI glycan remnant to the 1,6-beta-glucan of the outer cell wall layer.

The protein localises to the secreted. Its subcellular location is the cell wall. It localises to the membrane. In terms of biological role, seems to be involved in the correct timing of cell separation after cytokinesis, as separation of mutant daughter cells is delayed. Could either be an enzyme necessary for glucans-degradation of the cell wall at the neck region between mother and daughter cells or a regulatory protein controlling this metabolic step. In Saccharomyces cerevisiae (strain ATCC 204508 / S288c) (Baker's yeast), this protein is Protein EGT2 (EGT2).